The chain runs to 293 residues: Ribosomal protein L11 methyltransferase (293 aa).

S-adenosyl-L-methionine contacts are provided by Thr-145, Gly-166, Asp-188, and Asn-230.

Belongs to the methyltransferase superfamily. PrmA family.

Its subcellular location is the cytoplasm. The enzyme catalyses L-lysyl-[protein] + 3 S-adenosyl-L-methionine = N(6),N(6),N(6)-trimethyl-L-lysyl-[protein] + 3 S-adenosyl-L-homocysteine + 3 H(+). Methylates ribosomal protein L11. In Shewanella denitrificans (strain OS217 / ATCC BAA-1090 / DSM 15013), this protein is Ribosomal protein L11 methyltransferase.